The following is a 147-amino-acid chain: 3-dehydroquinate dehydratase (147 aa).

The active-site Proton acceptor is the Tyr24. Substrate is bound by residues Asn73, His79, and Asp86. His99 (proton donor) is an active-site residue. Residues 100–101 (LS) and Arg110 contribute to the substrate site.

The protein belongs to the type-II 3-dehydroquinase family. Homododecamer.

The catalysed reaction is 3-dehydroquinate = 3-dehydroshikimate + H2O. Its pathway is metabolic intermediate biosynthesis; chorismate biosynthesis; chorismate from D-erythrose 4-phosphate and phosphoenolpyruvate: step 3/7. Its function is as follows. Catalyzes a trans-dehydration via an enolate intermediate. The sequence is that of 3-dehydroquinate dehydratase from Hyphomonas neptunium (strain ATCC 15444).